We begin with the raw amino-acid sequence, 508 residues long: Cell division protein FtsZ (508 aa).

Residues 24-28, 111-113, Glu142, Arg146, and Asp190 contribute to the GTP site; these read GAGGN and GTG. Disordered stretches follow at residues 342–389 and 428–508; these read IAET…SAPQ and VAEE…RLAN. The segment covering 464–482 has biased composition (low complexity); sequence QQASAPQAQARSAQSARPQ.

It belongs to the FtsZ family. As to quaternary structure, homodimer. Polymerizes to form a dynamic ring structure in a strictly GTP-dependent manner. Interacts directly with several other division proteins.

The protein localises to the cytoplasm. Functionally, essential cell division protein that forms a contractile ring structure (Z ring) at the future cell division site. The regulation of the ring assembly controls the timing and the location of cell division. One of the functions of the FtsZ ring is to recruit other cell division proteins to the septum to produce a new cell wall between the dividing cells. Binds GTP and shows GTPase activity. This is Cell division protein FtsZ from Caulobacter vibrioides (strain ATCC 19089 / CIP 103742 / CB 15) (Caulobacter crescentus).